The following is a 193-amino-acid chain: uncharacterized protein (193 aa).

Residues 1–144 are disordered; sequence MEKKRTLSVN…NNNNNNEGTI (144 aa). Residues 29–86 are compositionally biased toward low complexity; sequence NSLNNIENNECNNNNNNNNNNNNNNSNSNNLNNSNNNNINTSSNSINSSNSINNSIDN. The segment covering 103 to 118 has biased composition (polar residues); it reads KMNSSQEFQSYLTPNK. Residues 119 to 140 show a composition bias toward low complexity; the sequence is NNNNRNNNNRNNNNNNNNNNNN. A helical membrane pass occupies residues 158 to 180; it reads YMIRPFLVGASASFGISIGMFYF.

It localises to the membrane. This is an uncharacterized protein from Dictyostelium discoideum (Social amoeba).